The chain runs to 201 residues: IMP cyclohydrolase (201 aa).

This sequence belongs to the archaeal IMP cyclohydrolase family.

The catalysed reaction is IMP + H2O = 5-formamido-1-(5-phospho-D-ribosyl)imidazole-4-carboxamide. The protein operates within purine metabolism; IMP biosynthesis via de novo pathway; IMP from 5-formamido-1-(5-phospho-D-ribosyl)imidazole-4-carboxamide: step 1/1. Catalyzes the cyclization of 5-formylamidoimidazole-4-carboxamide ribonucleotide to IMP. In Methanococcus maripaludis (strain C6 / ATCC BAA-1332), this protein is IMP cyclohydrolase.